Consider the following 410-residue polypeptide: Protein TIC 214 (410 aa).

6 consecutive transmembrane segments (helical) span residues 22–42 (FVFGLICGSLLGTSMNVGSFI), 61–81 (GSAISETFFLFLILFGYIGVI), 87–107 (LEPSLTFIITVFCADTIIGFL), 131–151 (AVIVFGNPGSTWGATSLITSI), 161–181 (LFLFGVFLGIFVIGCGIGFLI), and 210–230 (LALCILILSTIYYHWQVYIGL).

This sequence belongs to the TIC214 family. In terms of assembly, part of the Tic complex.

The protein localises to the plastid. It is found in the chloroplast inner membrane. Involved in protein precursor import into chloroplasts. May be part of an intermediate translocation complex acting as a protein-conducting channel at the inner envelope. This is Protein TIC 214 from Mesostigma viride (Green alga).